The sequence spans 301 residues: MSEPFKSGFVAIVGRPNVGKSTLLNHIIGQKIAIMSDKAQTTRNKVQGVYTTDESQIIFIDTPGIHKPKHKLGDFMVKIALNTFQEVDLIYFVIDASTGFGRGDEFIIEKLKNVQTPVFLLINKIDLIAPEDLFKLIEQYRDLMDFDEIIPISALQGNNVPNLLEQTNANLEIGPMYYPKDQITDHPERFIISELIREQVLQLTREEVPHSVAVVIEGIEKNPKTEKLTINATIIVERSTQKGIIIGKQGQMLKQIGMRARKEIERLLGSKVFLEIWVKVQKNWRDKEHYLQDYGFDREEY.

The region spanning 6–173 is the Era-type G domain; the sequence is KSGFVAIVGR…LEQTNANLEI (168 aa). The interval 14 to 21 is G1; sequence GRPNVGKS. Position 14-21 (14-21) interacts with GTP; it reads GRPNVGKS. The interval 40–44 is G2; it reads QTTRN. The segment at 61–64 is G3; it reads DTPG. Residues 61–65 and 123–126 contribute to the GTP site; these read DTPGI and NKID. Residues 123-126 are G4; the sequence is NKID. Residues 152–154 form a G5 region; the sequence is ISA. Residues 204 to 282 form the KH type-2 domain; that stretch reads TREEVPHSVA…FLEIWVKVQK (79 aa).

The protein belongs to the TRAFAC class TrmE-Era-EngA-EngB-Septin-like GTPase superfamily. Era GTPase family. In terms of assembly, monomer.

It localises to the cytoplasm. The protein resides in the cell membrane. An essential GTPase that binds both GDP and GTP, with rapid nucleotide exchange. Plays a role in 16S rRNA processing and 30S ribosomal subunit biogenesis and possibly also in cell cycle regulation and energy metabolism. The chain is GTPase Era from Listeria monocytogenes serotype 4b (strain F2365).